Reading from the N-terminus, the 157-residue chain is Protein-export protein SecB (157 aa).

It belongs to the SecB family. Homotetramer, a dimer of dimers. One homotetramer interacts with 1 SecA dimer.

It localises to the cytoplasm. In terms of biological role, one of the proteins required for the normal export of preproteins out of the cell cytoplasm. It is a molecular chaperone that binds to a subset of precursor proteins, maintaining them in a translocation-competent state. It also specifically binds to its receptor SecA. This chain is Protein-export protein SecB, found in Shewanella oneidensis (strain ATCC 700550 / JCM 31522 / CIP 106686 / LMG 19005 / NCIMB 14063 / MR-1).